The following is a 354-amino-acid chain: Uroporphyrinogen decarboxylase (354 aa).

Substrate-binding positions include 27–31, D77, Y154, T209, and H327; that span reads RQAGR.

This sequence belongs to the uroporphyrinogen decarboxylase family. In terms of assembly, homodimer.

The protein localises to the cytoplasm. It catalyses the reaction uroporphyrinogen III + 4 H(+) = coproporphyrinogen III + 4 CO2. Its pathway is porphyrin-containing compound metabolism; protoporphyrin-IX biosynthesis; coproporphyrinogen-III from 5-aminolevulinate: step 4/4. Functionally, catalyzes the decarboxylation of four acetate groups of uroporphyrinogen-III to yield coproporphyrinogen-III. The sequence is that of Uroporphyrinogen decarboxylase from Salmonella schwarzengrund (strain CVM19633).